The primary structure comprises 346 residues: Uroporphyrinogen decarboxylase (346 aa).

Substrate contacts are provided by residues 23-27 (RQAGR), D72, Y155, S209, and H322.

It belongs to the uroporphyrinogen decarboxylase family. In terms of assembly, homodimer.

It localises to the cytoplasm. It carries out the reaction uroporphyrinogen III + 4 H(+) = coproporphyrinogen III + 4 CO2. The protein operates within porphyrin-containing compound metabolism; protoporphyrin-IX biosynthesis; coproporphyrinogen-III from 5-aminolevulinate: step 4/4. In terms of biological role, catalyzes the decarboxylation of four acetate groups of uroporphyrinogen-III to yield coproporphyrinogen-III. This is Uroporphyrinogen decarboxylase from Anaeromyxobacter dehalogenans (strain 2CP-C).